The primary structure comprises 378 residues: Stimulator of interferon genes protein (378 aa).

Residues 1–17 (MPYSSLHPSIPQPRGLR) lie on the Cytoplasmic side of the membrane. Positions 1-190 (MPYSSLHPSI…AYNQRHKNVL (190 aa)) are mediates interaction with ZDHHC1 and ZDHHC11. The chain crosses the membrane as a helical span at residues 18–34 (AQVAALVLLGACLVALW). Residues 35–44 (GLGELPEYTL) lie on the Lumenal side of the membrane. Residues 45-69 (RWLVLHLASQQIGLLVKGLCSLAEE) traverse the membrane as a helical segment. Over 70 to 91 (LCHVHSRYQSSYWRAARACLGC) the chain is Cytoplasmic. 2 S-palmitoyl cysteine lipidation sites follow: cysteine 88 and cysteine 91. The chain crosses the membrane as a helical span at residues 92–106 (PIRCGALLLLSCYFY). Topologically, residues 107–116 (FSIRDKAGLP) are lumenal. A helical transmembrane segment spans residues 117 to 134 (LPWMLALLGLSQALNILL). Residues 135–378 (GLQHLAPAEV…QPLPLRSDIF (244 aa)) lie on the Cytoplasmic side of the membrane. Lysine 150 participates in a covalent cross-link: Glycyl lysine isopeptide (Lys-Gly) (interchain with G-Cter in ubiquitin). A cyclic dinucleotide-binding domain (CBD) region spans residues 153 to 339 (FNVAHGLAWS…LRHLRQEERE (187 aa)). 2',3'-cGAMP is bound by residues serine 162 and tyrosine 167. 3',3'-c-di-GMP is bound by residues serine 162 and tyrosine 167. Tyrosine 167 contacts 2',3'-cUAMP. Residue lysine 236 forms a Glycyl lysine isopeptide (Lys-Gly) (interchain with G-Cter in ubiquitin) linkage. 2',3'-cGAMP-binding residues include arginine 238 and threonine 263. 2',3'-cUAMP-binding residues include arginine 238 and threonine 263. Residues 238-241 (RVYT) and threonine 263 contribute to the 3',3'-c-di-GMP site. The C-terminal tail (CTT) stretch occupies residues 339–378 (EVTMGSAETSVVPTSSTLSQEPELLISGMEQPLPLRSDIF). Serine 354 is modified (phosphoserine). Phosphothreonine is present on threonine 355. Phosphoserine; by TBK1 occurs at positions 357 and 365. The pLxIS motif motif lies at 362–365 (LLIS).

This sequence belongs to the STING family. In terms of assembly, homodimer; forms a homodimer in absence of cyclic nucleotide (c-di-GMP or cGAMP); 'Lys-63'-linked ubiquitination at Lys-150 is required for homodimerization. Homotetramer; in presence of cyclic nucleotide (c-di-GMP or cGAMP), forms tetramers and higher-order oligomers through side-by-side packing. Interacts (when phosphorylated) with IRF3; following activation and phosphorylation on the pLxIS motif by TBK1, recruits IRF3. Interacts with DDX58/RIG-I, MAVS and SSR2. Interacts with RNF5 and TRIM56. Interacts with TBK1; when homodimer, leading to subsequent production of IFN-beta. Interacts with IFIT1 and IFIT2. Interacts with TRIM29; this interaction induces STING1 ubiquitination and subsequent degradation. Associates with the MHC-II complex. Interacts with STEEP1; interaction takes place upon cGAMP-activation and STING1 phosphorylation by MAP3K7/TAK1 and promotes STING1 translocation to COPII vesicles. Interacts with SEC24A, SEC24B and SEC24C; promoting translocation to COPII vesicles. Interacts (when ubiquitinated) with SQSTM1; leading to relocalization to autophagosomes. Interacts with SURF4. Interacts with HNRNPA2B1. Interacts with ZDHHC1; ZDHHC1 constitutively interacts with STING1 and in presence of DNA viruses activates it by promoting its cGAMP-induced oligomerization and the recruitment of downstream signaling components. Interacts with ZDHHC11; in presence of DNA viruses promotes the recruitment of IRF3 to STING1. Interacts with TOMM70. Interacts with TAB1; promoting recruitment of TAB1 to the endoplasmic reticulum membrane and subsequent activation of MAP3K7/TAK1. Interacts (via transmembrane domain) with TMEM203. Interacts with DDX41. (Microbial infection) Interacts with African swine fever virus/ASFV protein A528R; this interaction mediates STING1 degradation. As to quaternary structure, (Microbial infection) Interacts with African swine fever virus/ASFV minor capsid protein p17. In terms of assembly, (Microbial infection) Interacts with Pseudorabies virus protein UL13; this interaction mediates STING1 degradation in a RNF5-dependent manner. Post-translationally, phosphorylation by TBK1 leads to activation and production of IFN-beta. Following cyclic nucleotide (c-di-GMP or cGAMP)-binding, activation and translocation from the endoplasmic reticulum, STING1 is phosphorylated by TBK1 at Ser-365 in the pLxIS motif. The phosphorylated pLxIS motif constitutes an IRF3-binding motif, leading to recruitment of the transcription factor IRF3 to induce type-I interferons and other cytokines. Phosphorylated on tyrosine residues upon MHC-II aggregation. Dephosphorylation by PPP6C leads to inactivation and decreased production of IFN-beta. Phosphorylation at Ser-357 is also required to activate IRF3. Phosphorylation at Ser-354 by MAP3K7/TAK1 facilitates its interaction with STEEP1, promoting STING1 translocation to COPII vesicles. In terms of processing, ubiquitinated. Ubiquitinated via 'Lys-63'-linked ubiquitin chains in response to double-stranded DNA treatment, leading to relocalization to autophagosomes and subsequent degradation; this process is dependent on SQSTM1. 'Lys-63'-linked ubiquitination mediated by TRIM56 at Lys-150 promotes homodimerization and recruitment of the antiviral kinase TBK1 and subsequent production of IFN-beta. 'Lys-48'-linked polyubiquitination at Lys-150 occurring after viral infection is mediated by RNF5 and leads to proteasomal degradation. 'Lys-11'-linked polyubiquitination at Lys-150 by RNF26 leads to stabilize STING1: it protects STING1 from RNF5-mediated 'Lys-48'-linked polyubiquitination. 'Lys-33'-linked and 'Lys-48'-linked deubiquitinated by USP20; leading to its stabilization and promotion of innate antiviral response. 'Lys-48'-linked deubiquitinated by USP44; leading to its stabilization and promotion of innate antiviral response. Deubiquitinated by USP13; leading to inhibition of innate antiviral response. 'Lys-63'-linked deubiquitinated by USP49; leading to inhibition of the subsequent recruitment of TBK1 to the signaling complex. 'Lys-63'-linked ubiquitination mediated by RNF39 promotes the activation of the cGAS-STING pathway. Palmitoylation takes place in the Golgi apparatus and creates a platform for the recruitment of TBK1. As to expression, expressed at higher level in the spleen, lymph node, lung and bone marrow, followed by the small intestine, heart, liver and brain, and to a lesser extent in the stomach and kidney.

It localises to the endoplasmic reticulum membrane. It is found in the cytoplasm. The protein resides in the perinuclear region. Its subcellular location is the endoplasmic reticulum-Golgi intermediate compartment membrane. The protein localises to the golgi apparatus membrane. It localises to the cytoplasmic vesicle. It is found in the autophagosome membrane. The protein resides in the mitochondrion outer membrane. Its subcellular location is the cell membrane. The enzyme catalyses H(+)(in) = H(+)(out). Facilitator of innate immune signaling that acts as a sensor of cytosolic DNA from bacteria and viruses and promotes the production of type I interferon (IFN-alpha and IFN-beta). Innate immune response is triggered in response to non-CpG double-stranded DNA from viruses and bacteria delivered to the cytoplasm. Acts by binding cyclic dinucleotides: recognizes and binds cyclic di-GMP (c-di-GMP), a second messenger produced by bacteria, cyclic UMP-AMP (2',3'-cUAMP), and cyclic GMP-AMP (cGAMP), a messenger produced by CGAS in response to DNA virus in the cytosol. Upon binding to c-di-GMP, cUAMP or cGAMP, STING1 oligomerizes, translocates from the endoplasmic reticulum and is phosphorylated by TBK1 on the pLxIS motif, leading to recruitment and subsequent activation of the transcription factor IRF3 to induce expression of type I interferon and exert a potent anti-viral state. Exhibits 2',3' phosphodiester linkage-specific ligand recognition: can bind both 2'-3' linked cGAMP (2'-3'-cGAMP) and 3'-3' linked cGAMP but is preferentially activated by 2'-3' linked cGAMP. The preference for 2'-3'-cGAMP, compared to other linkage isomers is probably due to the ligand itself, whichs adopts an organized free-ligand conformation that resembles the STING1-bound conformation and pays low energy costs in changing into the active conformation. In addition to promote the production of type I interferons, plays a direct role in autophagy. Following cGAMP-binding, STING1 buds from the endoplasmic reticulum into COPII vesicles, which then form the endoplasmic reticulum-Golgi intermediate compartment (ERGIC). The ERGIC serves as the membrane source for WIPI2 recruitment and LC3 lipidation, leading to formation of autophagosomes that target cytosolic DNA or DNA viruses for degradation by the lysosome. Promotes autophagy by acting as a proton channel that directs proton efflux from the Golgi to facilitate MAP1LC3B/LC3B lipidation. The autophagy- and interferon-inducing activities can be uncoupled and autophagy induction is independent of TBK1 phosphorylation. Autophagy is also triggered upon infection by bacteria: following c-di-GMP-binding, which is produced by live Gram-positive bacteria, promotes reticulophagy. May be involved in translocon function, the translocon possibly being able to influence the induction of type I interferons. May be involved in transduction of apoptotic signals via its association with the major histocompatibility complex class II (MHC-II). This Sus scrofa (Pig) protein is Stimulator of interferon genes protein.